A 91-amino-acid polypeptide reads, in one-letter code: Small ribosomal subunit protein uS19 (91 aa).

The protein belongs to the universal ribosomal protein uS19 family.

Its function is as follows. Protein S19 forms a complex with S13 that binds strongly to the 16S ribosomal RNA. This is Small ribosomal subunit protein uS19 from Prochlorococcus marinus (strain SARG / CCMP1375 / SS120).